The primary structure comprises 571 residues: Dihydroxy-acid dehydratase (571 aa).

Residue C56 coordinates [2Fe-2S] cluster. Residue D88 participates in Mg(2+) binding. C129 is a [2Fe-2S] cluster binding site. Mg(2+) contacts are provided by D130 and K131. K131 is modified (N6-carboxylysine). C201 lines the [2Fe-2S] cluster pocket. Position 452 (E452) interacts with Mg(2+). The active-site Proton acceptor is the S478.

Belongs to the IlvD/Edd family. In terms of assembly, homodimer. The cofactor is [2Fe-2S] cluster. Requires Mg(2+) as cofactor.

The enzyme catalyses (2R)-2,3-dihydroxy-3-methylbutanoate = 3-methyl-2-oxobutanoate + H2O. It carries out the reaction (2R,3R)-2,3-dihydroxy-3-methylpentanoate = (S)-3-methyl-2-oxopentanoate + H2O. Its pathway is amino-acid biosynthesis; L-isoleucine biosynthesis; L-isoleucine from 2-oxobutanoate: step 3/4. It participates in amino-acid biosynthesis; L-valine biosynthesis; L-valine from pyruvate: step 3/4. Functions in the biosynthesis of branched-chain amino acids. Catalyzes the dehydration of (2R,3R)-2,3-dihydroxy-3-methylpentanoate (2,3-dihydroxy-3-methylvalerate) into 2-oxo-3-methylpentanoate (2-oxo-3-methylvalerate) and of (2R)-2,3-dihydroxy-3-methylbutanoate (2,3-dihydroxyisovalerate) into 2-oxo-3-methylbutanoate (2-oxoisovalerate), the penultimate precursor to L-isoleucine and L-valine, respectively. The sequence is that of Dihydroxy-acid dehydratase from Streptococcus suis (strain 98HAH33).